We begin with the raw amino-acid sequence, 554 residues long: Urocanate hydratase (554 aa).

NAD(+) is bound by residues 49–50 (GG), glutamine 127, 173–175 (GMG), glutamate 193, arginine 198, 239–240 (NA), 260–264 (QTSAH), 270–271 (YI), and tyrosine 319. Residue cysteine 407 is part of the active site. Glycine 489 is an NAD(+) binding site.

This sequence belongs to the urocanase family. The cofactor is NAD(+).

It is found in the cytoplasm. It catalyses the reaction 4-imidazolone-5-propanoate = trans-urocanate + H2O. It participates in amino-acid degradation; L-histidine degradation into L-glutamate; N-formimidoyl-L-glutamate from L-histidine: step 2/3. Its function is as follows. Catalyzes the conversion of urocanate to 4-imidazolone-5-propionate. The polypeptide is Urocanate hydratase (Bacillus velezensis (strain DSM 23117 / BGSC 10A6 / LMG 26770 / FZB42) (Bacillus amyloliquefaciens subsp. plantarum)).